The following is a 292-amino-acid chain: MYPSCRPRTPLPRPCMTFIATISWSAEAPVDTPVERSGKAVVSQHFGRAARSYDEHAVLQLAVGRSLVQRLPEALPINHALDLGCATAPFARAQQQALPDVQWQAVDLSSAMLAEAAERGRLDETYQPLCADAENLPLSTNSQGLVFSCFALQWCDPQVVMAEINRVLAPGGRLLLAVPLAGSLAELQSSWQRVNHRPHVNALPSLADWRSAAFQAGFADAQLQQQVMVEYYDSVKAIARRLKATGADHVSGASGLTGKNAWQAMVKEYEARRTQQGLPLTWNVLFLEAEKS.

This sequence belongs to the methyltransferase superfamily.

It carries out the reaction malonyl-[ACP] + S-adenosyl-L-methionine = malonyl-[ACP] methyl ester + S-adenosyl-L-homocysteine. Its pathway is cofactor biosynthesis; biotin biosynthesis. Its function is as follows. Converts the free carboxyl group of a malonyl-thioester to its methyl ester by transfer of a methyl group from S-adenosyl-L-methionine (SAM). It allows to synthesize pimeloyl-ACP via the fatty acid synthetic pathway. The chain is Malonyl-[acyl-carrier protein] O-methyltransferase from Alcanivorax borkumensis (strain ATCC 700651 / DSM 11573 / NCIMB 13689 / SK2).